We begin with the raw amino-acid sequence, 310 residues long: Pantothenate kinase (310 aa).

95–102 (GSVAVGKS) contacts ATP.

It belongs to the prokaryotic pantothenate kinase family.

Its subcellular location is the cytoplasm. The catalysed reaction is (R)-pantothenate + ATP = (R)-4'-phosphopantothenate + ADP + H(+). Its pathway is cofactor biosynthesis; coenzyme A biosynthesis; CoA from (R)-pantothenate: step 1/5. This Rhodococcus opacus (strain B4) protein is Pantothenate kinase.